Reading from the N-terminus, the 582-residue chain is Aspartate--tRNA ligase (582 aa).

Glu174 serves as a coordination point for L-aspartate. The segment at 198-201 (QITK) is aspartate. Arg220 contributes to the L-aspartate binding site. ATP contacts are provided by residues 220–222 (RDE) and Gln229. His443 contacts L-aspartate. Glu477 contacts ATP. Arg484 provides a ligand contact to L-aspartate. 529–532 (GLDR) serves as a coordination point for ATP.

Belongs to the class-II aminoacyl-tRNA synthetase family. Type 1 subfamily. In terms of assembly, homodimer.

It localises to the cytoplasm. The enzyme catalyses tRNA(Asp) + L-aspartate + ATP = L-aspartyl-tRNA(Asp) + AMP + diphosphate. Functionally, catalyzes the attachment of L-aspartate to tRNA(Asp) in a two-step reaction: L-aspartate is first activated by ATP to form Asp-AMP and then transferred to the acceptor end of tRNA(Asp). In Streptococcus pyogenes serotype M3 (strain ATCC BAA-595 / MGAS315), this protein is Aspartate--tRNA ligase.